Consider the following 202-residue polypeptide: Nitrophorin-3 (202 aa).

Residues 1 to 23 (MEPYSALLAVTILCLTSTMGVSG) form the signal peptide. Disulfide bonds link Cys-25-Cys-144 and Cys-62-Cys-193. A heme-binding site is contributed by His-80.

It belongs to the calycin superfamily. Nitrophorin family. As to quaternary structure, interacts weakly with host coagulation factor IX (F9) (inactive and activated) in the presence of Ca(2+). In terms of tissue distribution, salivary gland (at protein level).

The protein localises to the secreted. Heme-based protein that deliver nitric oxide gas (NO) to the victim while feeding, resulting in vasodilation and inhibition of platelet aggregation. Reversibly binds nitric oxide (NO). Also binds tightly to histamine, which is released by the host to induce wound healing. Exhibits weak anticoagulant activity. The chain is Nitrophorin-3 from Rhodnius prolixus (Triatomid bug).